Consider the following 227-residue polypeptide: Thiamine-phosphate synthase (227 aa).

4-amino-2-methyl-5-(diphosphooxymethyl)pyrimidine is bound by residues 46-50 and N87; that span reads QLRDK. Positions 88 and 107 each coordinate Mg(2+). S126 is a 4-amino-2-methyl-5-(diphosphooxymethyl)pyrimidine binding site. Position 152–154 (152–154) interacts with 2-[(2R,5Z)-2-carboxy-4-methylthiazol-5(2H)-ylidene]ethyl phosphate; the sequence is TPT. K155 provides a ligand contact to 4-amino-2-methyl-5-(diphosphooxymethyl)pyrimidine. G183 contacts 2-[(2R,5Z)-2-carboxy-4-methylthiazol-5(2H)-ylidene]ethyl phosphate.

Belongs to the thiamine-phosphate synthase family. Mg(2+) is required as a cofactor.

The enzyme catalyses 2-[(2R,5Z)-2-carboxy-4-methylthiazol-5(2H)-ylidene]ethyl phosphate + 4-amino-2-methyl-5-(diphosphooxymethyl)pyrimidine + 2 H(+) = thiamine phosphate + CO2 + diphosphate. It carries out the reaction 2-(2-carboxy-4-methylthiazol-5-yl)ethyl phosphate + 4-amino-2-methyl-5-(diphosphooxymethyl)pyrimidine + 2 H(+) = thiamine phosphate + CO2 + diphosphate. The catalysed reaction is 4-methyl-5-(2-phosphooxyethyl)-thiazole + 4-amino-2-methyl-5-(diphosphooxymethyl)pyrimidine + H(+) = thiamine phosphate + diphosphate. It functions in the pathway cofactor biosynthesis; thiamine diphosphate biosynthesis; thiamine phosphate from 4-amino-2-methyl-5-diphosphomethylpyrimidine and 4-methyl-5-(2-phosphoethyl)-thiazole: step 1/1. In terms of biological role, condenses 4-methyl-5-(beta-hydroxyethyl)thiazole monophosphate (THZ-P) and 2-methyl-4-amino-5-hydroxymethyl pyrimidine pyrophosphate (HMP-PP) to form thiamine monophosphate (TMP). The chain is Thiamine-phosphate synthase from Mycolicibacterium smegmatis (strain ATCC 700084 / mc(2)155) (Mycobacterium smegmatis).